The following is a 185-amino-acid chain: Elongation factor P (185 aa).

Belongs to the elongation factor P family.

The protein resides in the cytoplasm. Its pathway is protein biosynthesis; polypeptide chain elongation. Its function is as follows. Involved in peptide bond synthesis. Stimulates efficient translation and peptide-bond synthesis on native or reconstituted 70S ribosomes in vitro. Probably functions indirectly by altering the affinity of the ribosome for aminoacyl-tRNA, thus increasing their reactivity as acceptors for peptidyl transferase. This Caldanaerobacter subterraneus subsp. tengcongensis (strain DSM 15242 / JCM 11007 / NBRC 100824 / MB4) (Thermoanaerobacter tengcongensis) protein is Elongation factor P.